Here is a 787-residue protein sequence, read N- to C-terminus: uncharacterized protein (787 aa).

Met-1 is modified (N-acetylmethionine). Disordered regions lie at residues 1–115, 130–200, and 217–238; these read MFDG…NDHK, TNPF…QRSE, and VSSG…ASQD. Over residues 36–54 the composition is skewed to polar residues; sequence VPSTIKKSTNIARTSTAET. Ser-63 is subject to Phosphoserine. A compositionally biased stretch (polar residues) spans 130–142; the sequence is TNPFTTSANSNAH. The segment covering 160–169 has biased composition (low complexity); sequence SITTSISNNT. The segment covering 170 to 184 has biased composition (basic and acidic residues); it reads TKEEIESNNDSERDS. The segment covering 218-230 has biased composition (low complexity); the sequence is SSGSSLSLDTSEN. Phosphoserine occurs at positions 254, 313, 342, 345, 390, 477, 492, 546, 683, and 699.

Its subcellular location is the cytoplasm. This is an uncharacterized protein from Saccharomyces cerevisiae (strain ATCC 204508 / S288c) (Baker's yeast).